The following is a 95-amino-acid chain: uncharacterized protein (95 aa).

A helical transmembrane segment spans residues 45-65; it reads WLSGLAFVLQAALVMPVVLAF.

It localises to the membrane. This is an uncharacterized protein from Mycobacterium leprae (strain TN).